A 621-amino-acid polypeptide reads, in one-letter code: Leucine aminopeptidase (621 aa).

A propeptide spanning residues 1-73 (MPLLRSSQHI…ISNRKEFRKM (73 aa)) is cleaved from the precursor. The disordered stretch occupies residues 129–152 (SSSGGSGGNGGSAGSSGNGEGGAQ). Residues 132 to 150 (GGSGGNGGSAGSSGNGEGG) show a composition bias toward gly residues. A peptide-binding residues include Lys-390, Asp-395, and Lys-402. Zn(2+)-binding residues include Lys-390 and Asp-395. An L13 loop region spans residues 400–417 (NLKAAPGSMIDLMKFDMS). Residue Lys-402 is part of the active site. Residues Asp-410, Met-412, Asp-415, Asp-475, and Glu-477 each contribute to the Zn(2+) site. A peptide is bound by residues Asp-415 and Asp-475. The active site involves Arg-479.

The protein belongs to the peptidase M17 family. In terms of assembly, homohexamer composed of dimer of trimers. Both the identity and concentration of metal ions available dictate the extent to which oligomerization occurs; Mn(2+) and Co(2+) induces oligomerization, whereas Mg(2+) has no effect, and Zn(2+) causes irreversible protein aggregation in vitro. Zn(2+) is required as a cofactor.

It localises to the cytoplasm. The catalysed reaction is Release of an N-terminal amino acid, Xaa-|-Yaa-, in which Xaa is preferably Leu, but may be other amino acids including Pro although not Arg or Lys, and Yaa may be Pro. Amino acid amides and methyl esters are also readily hydrolyzed, but rates on arylamides are exceedingly low.. It carries out the reaction L-cysteinylglycine + H2O = L-cysteine + glycine. Its activity is regulated as follows. Oligomerization is required for catalytic activity and is metal-dependent. The type of metal that binds the 2 metal binding sites influences catalytic activity and substrate specificity. In vitro, activated by Co(2+), Mn(2+), Ni(2+), Mg(2+) and Zn(2+) with decreasing strength. Occupancy of the site 2 is essential and sufficient for activating the enzyme but occupation of the 2 sites is necessary for full catalytic activity. Inhibited by Ca(2+). Inhibited by fungal metabolite bestatin. Functionally, aminopeptidase which preferentially cleaves leucine residues from the N-terminus of peptides. Also, has some activity towards tryptophan and methionine and has very low activity towards alanine, arginine, asparagine, phenylalanine and tyrosine. No activity towards histidine, serine, valine, isoleucine, glycine, aspartic acid and glutamic acid. In addition, cleaves the Cys-Gly dipeptide, probably as part of the glutathione regulation pathway; cleavage only occurs in the presence of Mn(2+). Plays a role in the final step of host hemoglobin catabolism, by cleaving hemoglobin-derived oligopeptides providing a source of amino acids for the parasite protein synthesis and for the maintenance of osmotic homeostasis. The sequence is that of Leucine aminopeptidase from Plasmodium vivax (strain Salvador I).